Consider the following 344-residue polypeptide: Putative replication factor C small subunit L499 (344 aa).

An ATP-binding site is contributed by 57-64; that stretch reads GPSGSGKT.

It belongs to the activator 1 small subunits family. RfcS subfamily.

Part of the RFC clamp loader complex which loads the PCNA sliding clamp onto DNA. In Acanthamoeba polyphaga mimivirus (APMV), this protein is Putative replication factor C small subunit L499.